The sequence spans 186 residues: Translation initiation factor IF-3 (186 aa).

This sequence belongs to the IF-3 family. Monomer.

Its subcellular location is the cytoplasm. In terms of biological role, IF-3 binds to the 30S ribosomal subunit and shifts the equilibrium between 70S ribosomes and their 50S and 30S subunits in favor of the free subunits, thus enhancing the availability of 30S subunits on which protein synthesis initiation begins. The chain is Translation initiation factor IF-3 from Chlamydia caviae (strain ATCC VR-813 / DSM 19441 / 03DC25 / GPIC) (Chlamydophila caviae).